Consider the following 1351-residue polypeptide: Transcriptional regulator ovo (1351 aa).

The interval 1–31 is required for Ubr3 binding and tal-dependent proteolytic processing; the sequence is MPKIFLIKNRLHQQQQRLLESQNLLQHKNQD. 10 disordered regions span residues 22 to 77, 100 to 119, 184 to 397, 447 to 554, 640 to 665, 778 to 807, 834 to 887, 916 to 1000, 1023 to 1044, and 1113 to 1192; these read QNLL…SDQQ, LDHL…NPNQ, NSPI…SDEE, AGHG…HFNA, SNSK…GQTS, DDEE…PVEQ, GSNQ…YQHA, LLSQ…PSPT, PMSS…GSSN, and SKHG…DSSS. Positions 49–60 are enriched in pro residues; that stretch reads SPTPTSQPPPEP. Composition is skewed to low complexity over residues 61–72 and 104–119; these read QGQGQQVLGQVP and NQNQ…NPNQ. Residues 205–232 are compositionally biased toward basic and acidic residues; that stretch reads EKEKPAEREREKSDERTEQVEKEERVER. The segment covering 233–242 has biased composition (acidic residues); that stretch reads EEEEDDEVDV. Residues 262 to 272 show a composition bias toward basic and acidic residues; it reads QRKEYPQEPKD. The segment covering 324–340 has biased composition (pro residues); it reads TPPPADQRPSPPPPRDP. Over residues 447-486 the composition is skewed to low complexity; it reads AGHGRNSSSSSGAAGQGFQSSGFGSQNSGSGSSSGNQNAG. The span at 487–505 shows a compositional bias: gly residues; the sequence is SGAGSPGSGAGGGGGMGGG. Polar residues predominate over residues 530–552; it reads KSGQQSTASNNTGQSPGANHSHF. Over residues 644–653 the composition is skewed to basic residues; the sequence is FHNHHHHHQH. The span at 793-807 shows a compositional bias: polar residues; it reads STPSLTPDSVTPVEQ. Low complexity-rich tracts occupy residues 835–878, 916–962, 970–979, 1025–1044, and 1121–1175; these read SNQQ…HVQQ, LLSQ…QQQQ, QQQQQPQPQS, SSSS…GSSN, and HQQQ…HGSA. 4 C2H2-type zinc fingers span residues 1197 to 1219, 1225 to 1247, 1253 to 1276, and 1292 to 1315; these read FVCR…MKCH, YLCT…TRTH, YKCN…QKVH, and YVCE…KNNH.

Interacts (via N-terminus) with Ubr3; the interaction is mediated by tal. In terms of processing, N-terminus is proteolytically cleaved and ubiquitinated via a tal-dependent mechanism, leading to the proteolytic degradation of the N-terminus and the production of transcriptional activator shavenbaby, a truncated form with transcriptional activator activity.

It localises to the cytoplasm. The protein localises to the nucleus. It is found in the nucleoplasm. Functionally, transcriptional regulator with essential functions in the germline and soma. Plays an essential role in regulating the formation of apical cell extensions such as denticles and aristae, and initiating cytoskeletal remodeling during epidermal differentiation. Its function is as follows. Transcriptional repressor which functions in postembryonic development. The full-length unprocessed form acts as a transcriptional repressor (Transcriptional repressor svb). In terms of biological role, transcriptional activator which initiates trichome development and also promotes tarsal joint development. Has an essential somatic role regulating the tal-dependent formation of trichomes, and initiating cytoskeletal remodeling during epidermal differentiation. Function with SoxN is required for correct denticle morphogenesis on the embryonic epidermis. SoxN and svb appear to act both independently and in conjunction with each other to activate certain genes involved in denticle morphogenesis; Svb appears to be involved in regulating denticle length whereas SoxN regulates the denticle base circumference. Also functions in the development of other apical cell extensions such as bristles. Also has an important role in tarsal joint development, repressing expression of the N ligand Dl and defining its signaling boundary. Transcriptional repressor which is specifically involved in female germline development, where it functions antagonistically to isoform D. Negatively regulates expression of otu and may also have autoregulatory activity. Negatively regulates expression of piwi in the primordial germ cells (PGCs). Functionally, transcriptional activator which is specifically involved in female germline development, where it functions antagonistically to isoform C. Necessary and sufficient for normal oogenesis. Required in the primordial germ cells (PGCs) for normal development of male and female germline cells. Plays a role in germline sex determination. Binds the promoter DNA and positively regulates the transcription of the otu gene in a stage-specific manner. May have autoregulatory activity. This Drosophila melanogaster (Fruit fly) protein is Transcriptional regulator ovo.